Here is a 219-residue protein sequence, read N- to C-terminus: MAPPPSLAGLQVEATAFPPSVKPPGSSNTLFLGGAGVRGLEIQGNFVKFTAIGVYLEDNAVPLLAVKWKGKTAEELSESVEFFRDIVTGPFEKFIQVTTILPLTGQQYSEKVSENCVAFWKSVGIYTDAEGKAIEKFIEVFKDQNFPPGASILFTQSPKGSLTICFSKDASVPEAANAVIENKLLSEAVLESILGKHGVSPAAKRSLAARLSELLNGCK.

3 residues coordinate substrate: Thr-50, Asn-115, and Ser-192.

It belongs to the chalcone isomerase family.

The catalysed reaction is a chalcone = a flavanone.. It functions in the pathway secondary metabolite biosynthesis; flavonoid biosynthesis. Catalyzes the intramolecular cyclization of bicyclic chalcones into tricyclic (S)-flavanones. Responsible for the isomerization of 4,2',4',6'-tetrahydroxychalcone (also termed chalcone) into naringenin. The chain is Chalcone--flavanone isomerase (CHI) from Pyrus communis (Pear).